The following is a 216-amino-acid chain: Flavin prenyltransferase UbiX (216 aa).

FMN-binding positions include 9-11, Ser35, and Arg144; that span reads GAS. Dimethylallyl phosphate is bound by residues Tyr174 and Arg190.

It belongs to the UbiX/PAD1 family.

It catalyses the reaction dimethylallyl phosphate + FMNH2 = prenylated FMNH2 + phosphate. Flavin prenyltransferase that catalyzes the synthesis of the prenylated FMN cofactor (prenyl-FMN) for 4-hydroxy-3-polyprenylbenzoic acid decarboxylase UbiD. The prenyltransferase is metal-independent and links a dimethylallyl moiety from dimethylallyl monophosphate (DMAP) to the flavin N5 and C6 atoms of FMN. This Streptomyces coelicolor (strain ATCC BAA-471 / A3(2) / M145) protein is Flavin prenyltransferase UbiX.